The following is a 135-amino-acid chain: U-scoloptoxin(22)-Er1a (135 aa).

An N-terminal signal peptide occupies residues 1–24 (MAVILKHLAIILLVFVIEIKMGQG). Residues 61-135 (PQITFSTDWG…RSPRYLPTII (75 aa)) form a disordered region. Positions 75–127 (SVNEDREAAERERSPQMKRSEHEEQLMAKDEMKRFQEERNPSSDDKIAIDKRS) are enriched in basic and acidic residues.

Belongs to the scoloptoxin-22 family. In terms of tissue distribution, expressed by the venom gland.

The protein resides in the secreted. The protein is U-scoloptoxin(22)-Er1a of Ethmostigmus rubripes (Giant centipede).